Consider the following 430-residue polypeptide: Glutamate-1-semialdehyde 2,1-aminomutase (430 aa).

N6-(pyridoxal phosphate)lysine is present on Lys265.

Belongs to the class-III pyridoxal-phosphate-dependent aminotransferase family. HemL subfamily. Homodimer. Pyridoxal 5'-phosphate is required as a cofactor.

The protein resides in the cytoplasm. It carries out the reaction (S)-4-amino-5-oxopentanoate = 5-aminolevulinate. It participates in porphyrin-containing compound metabolism; protoporphyrin-IX biosynthesis; 5-aminolevulinate from L-glutamyl-tRNA(Glu): step 2/2. The protein is Glutamate-1-semialdehyde 2,1-aminomutase of Shewanella sp. (strain MR-7).